An 83-amino-acid chain; its full sequence is Hainantoxin-III 4 (83 aa).

Residues methionine 1–alanine 21 form the signal peptide. A propeptide spanning residues serine 22–arginine 48 is cleaved from the precursor. Disulfide bonds link cysteine 50-cysteine 65, cysteine 57-cysteine 70, and cysteine 64-cysteine 77. Leucine 81 carries the leucine amide modification.

It belongs to the neurotoxin 10 (Hwtx-1) family. 15 (Hntx-3) subfamily. As to quaternary structure, monomer. As to expression, expressed by the venom gland.

The protein localises to the secreted. Selective antagonist of neuronal tetrodotoxin (TTX)-sensitive voltage-gated sodium channels (IC(50)=1270 nM on Nav1.1/SCN1A, 270 nM on Nav1.2/SCN2A, 491 nM on Nav1.3/SCN3A and 232 nM on Nav1.7/SCN9A). This toxin suppress Nav1.7 current amplitude without significantly altering the activation, inactivation, and repriming kinetics. Short extreme depolarizations partially activate the toxin-bound channel, indicating voltage-dependent inhibition of this toxin. This toxin increases the deactivation of the Nav1.7 current after extreme depolarizations. The toxin-Nav1.7 complex is gradually dissociated upon prolonged strong depolarizations in a voltage-dependent manner, and the unbound toxin rebinds to Nav1.7 after a long repolarization. Moreover, analysis of chimeric channels showed that the DIIS3-S4 linker is critical for toxin binding to Nav1.7. These data are consistent with this toxin interacting with Nav1.7 site 4 and trapping the domain II voltage sensor in the closed state. The protein is Hainantoxin-III 4 of Cyriopagopus hainanus (Chinese bird spider).